The following is a 1213-amino-acid chain: DNA-directed RNA polymerase subunit beta' (1213 aa).

Residues cysteine 60, cysteine 62, cysteine 75, and cysteine 78 each contribute to the Zn(2+) site. Mg(2+)-binding residues include aspartate 450, aspartate 452, and aspartate 454. Zn(2+) contacts are provided by cysteine 819, cysteine 893, cysteine 900, and cysteine 903.

This sequence belongs to the RNA polymerase beta' chain family. The RNAP catalytic core consists of 2 alpha, 1 beta, 1 beta' and 1 omega subunit. When a sigma factor is associated with the core the holoenzyme is formed, which can initiate transcription. The cofactor is Mg(2+). It depends on Zn(2+) as a cofactor.

The catalysed reaction is RNA(n) + a ribonucleoside 5'-triphosphate = RNA(n+1) + diphosphate. Its function is as follows. DNA-dependent RNA polymerase catalyzes the transcription of DNA into RNA using the four ribonucleoside triphosphates as substrates. This is DNA-directed RNA polymerase subunit beta' from Streptococcus pyogenes serotype M6 (strain ATCC BAA-946 / MGAS10394).